The following is a 108-amino-acid chain: Nucleoid-associated protein BTH_I2220 (108 aa).

This sequence belongs to the YbaB/EbfC family. Homodimer.

Its subcellular location is the cytoplasm. It is found in the nucleoid. In terms of biological role, binds to DNA and alters its conformation. May be involved in regulation of gene expression, nucleoid organization and DNA protection. This is Nucleoid-associated protein BTH_I2220 from Burkholderia thailandensis (strain ATCC 700388 / DSM 13276 / CCUG 48851 / CIP 106301 / E264).